The primary structure comprises 802 residues: G-type lectin S-receptor-like serine/threonine-protein kinase At1g61550 (802 aa).

The first 19 residues, 1-19, serve as a signal peptide directing secretion; sequence MTRFACFLFSTLLLSFSYA. The 120-residue stretch at 20–139 folds into the Bulb-type lectin domain; it reads AITPTSPLSI…VSGITLWQSF (120 aa). Topologically, residues 20-421 are extracellular; that stretch reads AITPTSPLSI…EMGGNQRKKT (402 aa). 5 N-linked (GlcNAc...) asparagine glycosylation sites follow: N48, N89, N112, N231, and N262. In terms of domain architecture, EGF-like spans 273-309; sequence PANTCDFYGVCGPFGLCVMSIPPKCKCFKGFVPQFSE. 2 disulfide bridges follow: C277-C289 and C283-C297. N-linked (GlcNAc...) asparagine glycans are attached at residues N315, N331, and N370. In terms of domain architecture, PAN spans 328–410; it reads CQGNSTGRHV…GELLSIRLAS (83 aa). 2 cysteine pairs are disulfide-bonded: C363–C384 and C367–C373. A helical transmembrane segment spans residues 422 to 442; sequence IIASIVSISLFVTLASAAFGF. Over 443 to 802 the chain is Cytoplasmic; the sequence is WRYRLKHNAI…EVTQSVVLGR (360 aa). Residues 489–774 form the Protein kinase domain; sequence FSLVNKLGQG…DLPLPKEPTF (286 aa). ATP is bound by residues 495-503 and K517; that span reads LGQGGFGPV. Residues S523 and S538 each carry the phosphoserine modification. Residues 578–595 are caM-binding; that stretch reads RKRVEIDWPKRFSIIQGI. D614 (proton acceptor) is an active-site residue. A phosphoserine mark is found at S618 and S631. A Phosphothreonine modification is found at T648. A Phosphoserine modification is found at S691.

The protein belongs to the protein kinase superfamily. Ser/Thr protein kinase family.

The protein resides in the cell membrane. The catalysed reaction is L-seryl-[protein] + ATP = O-phospho-L-seryl-[protein] + ADP + H(+). The enzyme catalyses L-threonyl-[protein] + ATP = O-phospho-L-threonyl-[protein] + ADP + H(+). The sequence is that of G-type lectin S-receptor-like serine/threonine-protein kinase At1g61550 from Arabidopsis thaliana (Mouse-ear cress).